A 260-amino-acid chain; its full sequence is Adenosylcobinamide-GDP ribazoletransferase (260 aa).

6 consecutive transmembrane segments (helical) span residues 7–27 (WYFL…TRLP), 45–65 (LMGL…HWLG), 117–137 (AYGV…LASF), 145–165 (WALI…IALY), 187–207 (LLLG…ALAI), and 210–230 (WLIL…GRWF).

The protein belongs to the CobS family. It depends on Mg(2+) as a cofactor.

The protein localises to the cell inner membrane. It carries out the reaction alpha-ribazole + adenosylcob(III)inamide-GDP = adenosylcob(III)alamin + GMP + H(+). It catalyses the reaction alpha-ribazole 5'-phosphate + adenosylcob(III)inamide-GDP = adenosylcob(III)alamin 5'-phosphate + GMP + H(+). It participates in cofactor biosynthesis; adenosylcobalamin biosynthesis; adenosylcobalamin from cob(II)yrinate a,c-diamide: step 7/7. In terms of biological role, joins adenosylcobinamide-GDP and alpha-ribazole to generate adenosylcobalamin (Ado-cobalamin). Also synthesizes adenosylcobalamin 5'-phosphate from adenosylcobinamide-GDP and alpha-ribazole 5'-phosphate. The sequence is that of Adenosylcobinamide-GDP ribazoletransferase from Synechocystis sp. (strain ATCC 27184 / PCC 6803 / Kazusa).